The chain runs to 432 residues: Glutamate-1-semialdehyde 2,1-aminomutase (432 aa).

Lysine 272 bears the N6-(pyridoxal phosphate)lysine mark.

Belongs to the class-III pyridoxal-phosphate-dependent aminotransferase family. HemL subfamily. As to quaternary structure, homodimer. It depends on pyridoxal 5'-phosphate as a cofactor.

Its subcellular location is the cytoplasm. It catalyses the reaction (S)-4-amino-5-oxopentanoate = 5-aminolevulinate. It participates in porphyrin-containing compound metabolism; protoporphyrin-IX biosynthesis; 5-aminolevulinate from L-glutamyl-tRNA(Glu): step 2/2. The protein operates within porphyrin-containing compound metabolism; chlorophyll biosynthesis. In Nostoc sp. (strain PCC 7120 / SAG 25.82 / UTEX 2576), this protein is Glutamate-1-semialdehyde 2,1-aminomutase.